We begin with the raw amino-acid sequence, 287 residues long: 1-acyl-sn-glycerol-3-phosphate acyltransferase alpha (287 aa).

An N-terminal signal peptide occupies residues 1–26 (MELWPGAGTLLLLLFLLLLLLLPTLW). Residues 27–37 (FCSPSAKYFFK) are Lumenal-facing. A helical transmembrane segment spans residues 38–58 (MAFYNGWILFLAVLAIPVCAV). Residues 59–127 (RGRNVENMKI…PGRCVPIAKR (69 aa)) are Cytoplasmic-facing. The HXXXXD motif motif lies at 104 to 109 (HQSSLD). A helical membrane pass occupies residues 128–148 (ELLWAGSAGLACWLAGVIFID). Residues 149 to 287 (RKRTGDAISV…KPGGVGEAGL (139 aa)) are Lumenal-facing. Positions 178–181 (EGTR) match the EGTR motif motif.

It belongs to the 1-acyl-sn-glycerol-3-phosphate acyltransferase family.

Its subcellular location is the endoplasmic reticulum membrane. It catalyses the reaction a 1-acyl-sn-glycero-3-phosphate + an acyl-CoA = a 1,2-diacyl-sn-glycero-3-phosphate + CoA. The catalysed reaction is 1-(9Z-octadecenoyl)-sn-glycero-3-phosphate + (9Z)-octadecenoyl-CoA = 1,2-di-(9Z-octadecenoyl)-sn-glycero-3-phosphate + CoA. It carries out the reaction 1-(9Z-octadecenoyl)-sn-glycero-3-phosphate + hexadecanoyl-CoA = 1-(9Z)-octadecenoyl-2-hexadecanoyl-sn-glycero-3-phosphate + CoA. The enzyme catalyses heptadecanoyl-CoA + 1-(9Z-octadecenoyl)-sn-glycero-3-phosphate = 1-(9Z)-octadecenoyl-2-heptadecanoyl-sn-glycero-3-phosphate + CoA. It catalyses the reaction 1-(9Z-octadecenoyl)-sn-glycero-3-phosphate + octadecanoyl-CoA = 1-(9Z-octadecenoyl)-2-octadecanoyl-sn-glycero-3-phosphate + CoA. The catalysed reaction is 1-(9Z-octadecenoyl)-sn-glycero-3-phosphate + (9Z,12Z)-octadecadienoyl-CoA = 1-(9Z)-octadecenoyl-2-(9Z,12Z)-octadecadienoyl-sn-glycero-3-phosphate + CoA. It carries out the reaction 1-(9Z-octadecenoyl)-sn-glycero-3-phosphate + tetradecanoyl-CoA = 1-(9Z)-octadecenoyl-2-tetradecanoyl-sn-glycero-3-phosphate + CoA. The enzyme catalyses pentadecanoyl-CoA + 1-(9Z-octadecenoyl)-sn-glycero-3-phosphate = 1-(9Z)-octadecenoyl-2-pentadecanoyl-sn-glycero-3-phosphate + CoA. It catalyses the reaction 1-hexadecanoyl-sn-glycero-3-phosphate + (9Z)-octadecenoyl-CoA = 1-hexadecanoyl-2-(9Z-octadecenoyl)-sn-glycero-3-phosphate + CoA. The catalysed reaction is 1-(9Z,12Z,15Z)-octadecatrienoyl-sn-glycero-3-phosphate + (9Z)-octadecenoyl-CoA = 1-(9Z,12Z,15Z)-octadecatrienoyl-2-(9Z)-octadecenoyl-sn-glycero-3-phosphate + CoA. It carries out the reaction 1-(6Z,9Z,12Z-octadecatrienoyl)-sn-glycero-3-phosphate + (9Z)-octadecenoyl-CoA = (6Z,9Z,12Z)-octadecatrienoyl-2-(9Z)-octadecenoyl-sn-glycero-3-phosphate + CoA. The enzyme catalyses 1-eicosanoyl-sn-glycero-3-phosphate + (9Z)-octadecenoyl-CoA = 1-eicosanoyl-2-(9Z)-octadecenoyl-sn-glycero-3-phosphate + CoA. It catalyses the reaction 1-tetradecanoyl-sn-glycerol 3-phosphate + (9Z)-octadecenoyl-CoA = 1-tetradecanoyl-2-(9Z)-octadecenoyl-sn-glycero-3-phosphate + CoA. The catalysed reaction is 1-(9Z-octadecenoyl)-sn-glycero-3-phosphate + (5Z,8Z,11Z,14Z)-eicosatetraenoyl-CoA = 1-(9Z)-octadecenoyl-2-(5Z,8Z,11Z,14Z)-eicosatetraenoyl-sn-glycero-3-phosphate + CoA. It carries out the reaction 1-(9Z-octadecenoyl)-sn-glycero-3-phosphate + dodecanoyl-CoA = 1-(9Z)-octadecenoyl-2-dodecanoyl-sn-glycero-3-phosphate + CoA. The enzyme catalyses (6Z)-octadecenoyl-CoA + 1-(9Z-octadecenoyl)-sn-glycero-3-phosphate = 1-(9Z)-octadecenoyl-2-(6Z)-octadecenoyl-sn-glycero-3-phosphate + CoA. It catalyses the reaction (11Z)-octadecenoyl-CoA + 1-(9Z-octadecenoyl)-sn-glycero-3-phosphate = 1-(9Z)-octadecenoyl-2-(11Z)-octadecenoyl-sn-glycero-3-phosphate + CoA. The catalysed reaction is (9Z)-hexadecenoyl-CoA + 1-(9Z-octadecenoyl)-sn-glycero-3-phosphate = 1-(9Z-octadecenoyl)-2-(9Z-hexadecenoyl)-sn-glycero-3-phosphate + CoA. The protein operates within phospholipid metabolism; CDP-diacylglycerol biosynthesis; CDP-diacylglycerol from sn-glycerol 3-phosphate: step 2/3. Converts 1-acyl-sn-glycerol-3-phosphate (lysophosphatidic acid or LPA) into 1,2-diacyl-sn-glycerol-3-phosphate (phosphatidic acid or PA) by incorporating an acyl moiety at the sn-2 position of the glycerol backbone. This Bos taurus (Bovine) protein is 1-acyl-sn-glycerol-3-phosphate acyltransferase alpha (AGPAT1).